Here is a 137-residue protein sequence, read N- to C-terminus: Cell division protein SepF (137 aa).

It belongs to the SepF family. In terms of assembly, homodimer. Interacts with FtsZ.

The protein resides in the cytoplasm. Functionally, cell division protein that is part of the divisome complex and is recruited early to the Z-ring. Probably stimulates Z-ring formation, perhaps through the cross-linking of FtsZ protofilaments. Its function overlaps with FtsA. This is Cell division protein SepF from Thermoanaerobacter pseudethanolicus (strain ATCC 33223 / 39E) (Clostridium thermohydrosulfuricum).